The primary structure comprises 201 residues: NAD(P)H quinone oxidoreductase PST2 (201 aa).

Positions 6-192 (VAIIIYSLYH…SIAQQQGEDF (187 aa)) constitute a Flavodoxin-like domain. FMN-binding positions include 12–16 (SLYHH) and 112–164 (VFVS…SPWG).

This sequence belongs to the WrbA family. The cofactor is FMN.

It is found in the cell membrane. It carries out the reaction a quinone + NADH + H(+) = a quinol + NAD(+). It catalyses the reaction a quinone + NADPH + H(+) = a quinol + NADP(+). Functionally, flavodoxin-like protein (FLP) that plays a role in cell wall integrity, oxidative stress protection and virulence. FLPs act as NAD(P)H quinone oxidoreductases. Reduces ubiquinone (coenzyme Q), enabling it to serve as an antioxidant in the membrane. The protein is NAD(P)H quinone oxidoreductase PST2 of Candida albicans (strain SC5314 / ATCC MYA-2876) (Yeast).